The following is a 486-amino-acid chain: MVATPSTSAPTKGVVRQVIGPVLDVEFPAGKLPKILNALRIESKNPAGQDIALTAEVQQLLGDHRVRAVAMSGTDGLVRGMEATDTGAPISVPVGEATLGRIFNVLGEPVDEQGPVKTSDTAPIHRSAPKLTDLETKPKVFETGIKVIDLLAPYRQGGKVGLFGGAGVGKTVLIQELINNIAKEHGGVSVFGGVGERTREGNDLYEEFKESGVINAEDLSQSKVALCFGQMNEPPGARMRVGLSALTMAEHFRDVNKQDVLLFVDNIFRFVQAGSEVSALLGRMPSAVGYQPTLGTDVGALQERITSTLEGSITSIQAVYVPADDLTDPAPATTFAHLDATTVLARGLAAKGIYPAVDPLDSTSTMLQPSVVGDDHYKTARAVQSTLQRYKELQDIIAILGLDELSEEDRLTVSRARKIEKFLSQPFFVAEIFTGMSGKYVKLEDTIAGFNMILAGELDDLPEQAFYLVGNIEEVKAKADKINSEK.

ATP is bound at residue 164–171; the sequence is GGAGVGKT.

The protein belongs to the ATPase alpha/beta chains family. F-type ATPases have 2 components, CF(1) - the catalytic core - and CF(0) - the membrane proton channel. CF(1) has five subunits: alpha(3), beta(3), gamma(1), delta(1), epsilon(1). CF(0) has four main subunits: a(1), b(1), b'(1) and c(9-12).

The protein localises to the cellular thylakoid membrane. It catalyses the reaction ATP + H2O + 4 H(+)(in) = ADP + phosphate + 5 H(+)(out). In terms of biological role, produces ATP from ADP in the presence of a proton gradient across the membrane. The catalytic sites are hosted primarily by the beta subunits. This chain is ATP synthase subunit beta, found in Prochlorococcus marinus (strain MIT 9515).